The following is a 584-amino-acid chain: DNA damage-binding protein CMR1 (584 aa).

The span at 29–44 (SATDSISREIPNQRQA) shows a compositional bias: polar residues. Residues 29–90 (SATDSISREI…TEEYQKVKEE (62 aa)) form a disordered region. Residues 59 to 68 (IKKEPQEPSR) show a composition bias toward basic and acidic residues. Residues 76–110 (VTMENTEEYQKVKEEMEEAERKKKELEKLKSTRLF) adopt a coiled-coil conformation. WD repeat units lie at residues 226 to 267 (ITHQ…DEDP), 274 to 314 (PHGR…SSEV), 373 to 413 (LHDK…KSNS), 431 to 469 (SSRL…SELP), 506 to 549 (GRWV…LAHL), and 553 to 584 (EKVG…YLFE).

This sequence belongs to the WD repeat DDB2/WDR76 family.

DNA-binding protein that binds to both single- and double-stranded DNA. Binds preferentially to UV-damaged DNA. May be involved in DNA-metabolic processes. The polypeptide is DNA damage-binding protein CMR1 (Debaryomyces hansenii (strain ATCC 36239 / CBS 767 / BCRC 21394 / JCM 1990 / NBRC 0083 / IGC 2968) (Yeast)).